We begin with the raw amino-acid sequence, 422 residues long: UDP-N-acetylglucosamine 1-carboxyvinyltransferase (422 aa).

22-23 (KN) contacts phosphoenolpyruvate. Residue Arg-95 coordinates UDP-N-acetyl-alpha-D-glucosamine. Cys-119 acts as the Proton donor in catalysis. Cys-119 carries the 2-(S-cysteinyl)pyruvic acid O-phosphothioketal modification. Residues 124–128 (RPIDQ), Asp-309, and Val-331 each bind UDP-N-acetyl-alpha-D-glucosamine.

This sequence belongs to the EPSP synthase family. MurA subfamily.

The protein localises to the cytoplasm. The enzyme catalyses phosphoenolpyruvate + UDP-N-acetyl-alpha-D-glucosamine = UDP-N-acetyl-3-O-(1-carboxyvinyl)-alpha-D-glucosamine + phosphate. Its pathway is cell wall biogenesis; peptidoglycan biosynthesis. Cell wall formation. Adds enolpyruvyl to UDP-N-acetylglucosamine. The chain is UDP-N-acetylglucosamine 1-carboxyvinyltransferase from Anaeromyxobacter dehalogenans (strain 2CP-1 / ATCC BAA-258).